Consider the following 139-residue polypeptide: MALRMLWAGQAKGILGGWRTICLVVSLFLQHPGVSSKCYFQAQAPCHYEGKYFTLGESWLRKDCFHCTCLHPVGVGCCDTAQHPIDFPAECEVLQEAGTCQFSLVQKADPRLPCKGGGPDLEWGSANTPAPGASAPHSS.

The first 35 residues, 1-35, serve as a signal peptide directing secretion; the sequence is MALRMLWAGQAKGILGGWRTICLVVSLFLQHPGVS. 5 cysteine pairs are disulfide-bonded: Cys38–Cys78, Cys46–Cys69, Cys64–Cys100, Cys67–Cys77, and Cys91–Cys114. Residues 116–139 are disordered; that stretch reads GGGPDLEWGSANTPAPGASAPHSS.

Belongs to the beta-microseminoprotein family.

It is found in the secreted. In terms of biological role, acts as a ligand for C-C chemokine receptor CCR2. Signals through binding and activation of CCR2 and induces a strong chemotactic response and mobilization of intracellular calcium ions. Exhibits a chemotactic activity for monocytes and lymphocytes but not neutrophils. The polypeptide is Prostate-associated microseminoprotein (Msmp) (Mus musculus (Mouse)).